Consider the following 156-residue polypeptide: Methylated-DNA--protein-cysteine methyltransferase (156 aa).

The active-site Nucleophile; methyl group acceptor is Cys-120.

The protein belongs to the MGMT family.

The protein resides in the cytoplasm. The catalysed reaction is a 6-O-methyl-2'-deoxyguanosine in DNA + L-cysteinyl-[protein] = S-methyl-L-cysteinyl-[protein] + a 2'-deoxyguanosine in DNA. It catalyses the reaction a 4-O-methyl-thymidine in DNA + L-cysteinyl-[protein] = a thymidine in DNA + S-methyl-L-cysteinyl-[protein]. In terms of biological role, involved in the cellular defense against the biological effects of O6-methylguanine (O6-MeG) and O4-methylthymine (O4-MeT) in DNA. Repairs the methylated nucleobase in DNA by stoichiometrically transferring the methyl group to a cysteine residue in the enzyme. This is a suicide reaction: the enzyme is irreversibly inactivated. The polypeptide is Methylated-DNA--protein-cysteine methyltransferase (Sulfurisphaera tokodaii (strain DSM 16993 / JCM 10545 / NBRC 100140 / 7) (Sulfolobus tokodaii)).